A 421-amino-acid chain; its full sequence is Forkhead box protein J1 (421 aa).

Disordered stretches follow at residues 1-32 (MAESWLRLCGAGPGEEAGPEGGMEEPDALDDS) and 77-110 (ADPACLGQPHTPGKPTSSCTSRSAPPGLQAPPPD). Over residues 11-21 (AGPGEEAGPEG) the composition is skewed to gly residues. Residues 90–99 (KPTSSCTSRS) show a composition bias toward polar residues. Residues 120–210 (VKPPYSYATL…YAERLLSGAF (91 aa)) constitute a DNA-binding region (fork-head).

This sequence belongs to the FOXJ1 family. In terms of tissue distribution, predominantly expressed in tissues containing motile cilia.

Its subcellular location is the nucleus. Its function is as follows. Transcription factor specifically required for the formation of motile cilia. Acts by activating transcription of genes that mediate assembly of motile cilia, such as CFAP157. Binds the DNA consensus sequences 5'-HWDTGTTTGTTTA-3' or 5'-KTTTGTTGTTKTW-3' (where H is not G, W is A or T, D is not C, and K is G or T). Activates the transcription of a variety of ciliary proteins in the developing brain and lung. The protein is Forkhead box protein J1 of Mus musculus (Mouse).